A 132-amino-acid chain; its full sequence is Small ribosomal subunit protein uS8 (132 aa).

The protein belongs to the universal ribosomal protein uS8 family. In terms of assembly, part of the 30S ribosomal subunit. Contacts proteins S5 and S12.

Functionally, one of the primary rRNA binding proteins, it binds directly to 16S rRNA central domain where it helps coordinate assembly of the platform of the 30S subunit. The chain is Small ribosomal subunit protein uS8 from Bacillus mycoides (strain KBAB4) (Bacillus weihenstephanensis).